A 354-amino-acid polypeptide reads, in one-letter code: cAMP-dependent protein kinase catalytic subunit 2 (354 aa).

In terms of domain architecture, Protein kinase spans 45 to 301 (YITRAVLGNG…SSDVKSHPWF (257 aa)). Residues 51 to 59 (LGNGSFGTV) and Lys74 each bind ATP. Asp168 functions as the Proton acceptor in the catalytic mechanism. Residues 302 to 354 (QGVDWFGILNQEVTAPYQPTISGAEDLSNFENFEFKDRYKSRINRHPELFANF) form the AGC-kinase C-terminal domain.

Belongs to the protein kinase superfamily. AGC Ser/Thr protein kinase family. cAMP subfamily. More abundant in adult body than adult head.

The enzyme catalyses L-seryl-[protein] + ATP = O-phospho-L-seryl-[protein] + ADP + H(+). It catalyses the reaction L-threonyl-[protein] + ATP = O-phospho-L-threonyl-[protein] + ADP + H(+). This Drosophila melanogaster (Fruit fly) protein is cAMP-dependent protein kinase catalytic subunit 2 (Pka-C2).